The following is a 633-amino-acid chain: Probable extracellular metalloproteinase 5 (633 aa).

An N-terminal signal peptide occupies residues 1–20 (MHGLLLAAAGLLSLPLHVLA). Positions 21–244 (HPQPSTNLAG…VHNVVDYVSH (224 aa)) are excised as a propeptide. A glycan (N-linked (GlcNAc...) asparagine) is linked at Asn-285. His-428 contacts Zn(2+). Residue Glu-429 is part of the active site. His-432 lines the Zn(2+) pocket. Asn-592 and Asn-621 each carry an N-linked (GlcNAc...) asparagine glycan.

Belongs to the peptidase M36 family. Zn(2+) serves as cofactor.

It is found in the secreted. Its function is as follows. Secreted metalloproteinase probably acting as a virulence factor. The sequence is that of Probable extracellular metalloproteinase 5 (MEP5) from Trichophyton verrucosum (strain HKI 0517).